The primary structure comprises 361 residues: Chorismate synthase (361 aa).

NADP(+) is bound by residues R48 and R54. Residues 125–127 (RSS), 238–239 (NA), G278, 293–297 (KPTSS), and R319 contribute to the FMN site.

Belongs to the chorismate synthase family. Homotetramer. Requires FMNH2 as cofactor.

It catalyses the reaction 5-O-(1-carboxyvinyl)-3-phosphoshikimate = chorismate + phosphate. It participates in metabolic intermediate biosynthesis; chorismate biosynthesis; chorismate from D-erythrose 4-phosphate and phosphoenolpyruvate: step 7/7. Its function is as follows. Catalyzes the anti-1,4-elimination of the C-3 phosphate and the C-6 proR hydrogen from 5-enolpyruvylshikimate-3-phosphate (EPSP) to yield chorismate, which is the branch point compound that serves as the starting substrate for the three terminal pathways of aromatic amino acid biosynthesis. This reaction introduces a second double bond into the aromatic ring system. The sequence is that of Chorismate synthase from Escherichia coli O7:K1 (strain IAI39 / ExPEC).